A 152-amino-acid polypeptide reads, in one-letter code: Transcriptional regulator MraZ (152 aa).

SpoVT-AbrB domains lie at 5–52 and 81–124; these read AQAI…PLKE and ATEC…SETE.

The protein belongs to the MraZ family. As to quaternary structure, forms oligomers.

The protein localises to the cytoplasm. The protein resides in the nucleoid. The protein is Transcriptional regulator MraZ of Mannheimia succiniciproducens (strain KCTC 0769BP / MBEL55E).